A 148-amino-acid polypeptide reads, in one-letter code: Aspartate 1-decarboxylase (148 aa).

Catalysis depends on S25, which acts as the Schiff-base intermediate with substrate; via pyruvic acid. S25 bears the Pyruvic acid (Ser) mark. T57 is a substrate binding site. Residue Y58 is the Proton donor of the active site. 73–75 (GAA) lines the substrate pocket.

This sequence belongs to the PanD family. As to quaternary structure, heterooctamer of four alpha and four beta subunits. Requires pyruvate as cofactor. In terms of processing, is synthesized initially as an inactive proenzyme, which is activated by self-cleavage at a specific serine bond to produce a beta-subunit with a hydroxyl group at its C-terminus and an alpha-subunit with a pyruvoyl group at its N-terminus.

The protein resides in the cytoplasm. It carries out the reaction L-aspartate + H(+) = beta-alanine + CO2. It functions in the pathway cofactor biosynthesis; (R)-pantothenate biosynthesis; beta-alanine from L-aspartate: step 1/1. Functionally, catalyzes the pyruvoyl-dependent decarboxylation of aspartate to produce beta-alanine. The polypeptide is Aspartate 1-decarboxylase (Rhodococcus opacus (strain B4)).